The sequence spans 246 residues: Alpha-tubulin N-acetyltransferase (246 aa).

Positions 21 to 202 constitute an N-acetyltransferase domain; sequence LTLVPDGVSR…NNFVVFHSFF (182 aa). Residues 135–148 and 172–181 each bind acetyl-CoA; these read FYVD…GYGK and SNKLLGFLRK.

Belongs to the acetyltransferase ATAT1 family.

It catalyses the reaction L-lysyl-[alpha-tubulin] + acetyl-CoA = N(6)-acetyl-L-lysyl-[alpha-tubulin] + CoA + H(+). Specifically acetylates 'Lys-40' in alpha-tubulin on the lumenal side of microtubules. Promotes microtubule destabilization and accelerates microtubule dynamics; this activity may be independent of acetylation activity. Acetylates alpha-tubulin with a slow enzymatic rate, due to a catalytic site that is not optimized for acetyl transfer. Enters the microtubule through each end and diffuses quickly throughout the lumen of microtubules. Acetylates only long/old microtubules because of its slow acetylation rate since it does not have time to act on dynamically unstable microtubules before the enzyme is released. This is Alpha-tubulin N-acetyltransferase from Leishmania infantum.